Here is a 331-residue protein sequence, read N- to C-terminus: 2-oxoglutarate-dependent dioxygenase (331 aa).

The region spanning 186–292 (PACPLRLLHY…RYSVVFFMDG (107 aa)) is the Fe2OG dioxygenase domain. The Fe cation site is built by histidine 214, aspartate 216, and histidine 272. Arginine 283 provides a ligand contact to 2-oxoglutarate.

It belongs to the iron/ascorbate-dependent oxidoreductase family. It depends on Fe(2+) as a cofactor.

It functions in the pathway mycotoxin biosynthesis. 2-oxoglutarate-dependent dioxygenase; part of the gene cluster that mediates the biosynthesis of the selective antifungal agent ascochitine, an o-quinone methide that plays a possible protective role against other microbial competitors in nature and is considered to be important for pathogenicity of legume-associated Didymella species. The pathway probably begins with the synthesis of a keto-aldehyde intermediate by the ascochitine non-reducing polyketide synthase pksAC from successive condensations of 4 malonyl-CoA units, presumably with a simple acetyl-CoA starter unit. Release of the keto-aldehyde intermediate is consistent with the presence of the C-terminal reductive release domain. The HR-PKS (orf7) probably makes a diketide starter unit which is passed to the non-reducing polyketide synthase pksAC for further extension, producing ascochital and ascochitine. The aldehyde dehydrogenase (orf1), the 2-oxoglutarate-dependent dioxygenase (orf3) and the dehydrogenase (orf9) are probably involved in subsequent oxidations of methyl groups to the carboxylic acid of the heterocyclic ring. The ascochitine gene cluster also includes a gene encoding a short peptide with a cupin domain (orf2) that is often found in secondary metabolite gene clusters and which function has still to be determined. This Didymella fabae (Leaf and pod spot disease fungus) protein is 2-oxoglutarate-dependent dioxygenase.